A 426-amino-acid polypeptide reads, in one-letter code: Serine/threonine-protein kinase ssn3 (426 aa).

A Protein kinase domain is found at Y41–F368. ATP contacts are provided by residues I47–V55 and K71. The active-site Proton acceptor is D173. Positions R390–E426 are disordered.

Belongs to the protein kinase superfamily. CMGC Ser/Thr protein kinase family. CDC2/CDKX subfamily. Component of the srb8-11 complex, a regulatory module of the Mediator complex. Requires Mg(2+) as cofactor.

The protein localises to the nucleus. It catalyses the reaction L-seryl-[protein] + ATP = O-phospho-L-seryl-[protein] + ADP + H(+). It carries out the reaction L-threonyl-[protein] + ATP = O-phospho-L-threonyl-[protein] + ADP + H(+). The enzyme catalyses [DNA-directed RNA polymerase] + ATP = phospho-[DNA-directed RNA polymerase] + ADP + H(+). Its function is as follows. Component of the srb8-11 complex. The srb8-11 complex is a regulatory module of the Mediator complex which is itself involved in regulation of basal and activated RNA polymerase II-dependent transcription. The srb8-11 complex may be involved in the transcriptional repression of a subset of genes regulated by Mediator. It may inhibit the association of the Mediator complex with RNA polymerase II to form the holoenzyme complex. The srb8-11 complex phosphorylates the C-terminal domain (CTD) of the largest subunit of RNA polymerase II. The chain is Serine/threonine-protein kinase ssn3 (ssn3) from Aspergillus fumigatus (strain ATCC MYA-4609 / CBS 101355 / FGSC A1100 / Af293) (Neosartorya fumigata).